The sequence spans 54 residues: Large ribosomal subunit protein bL33A (54 aa).

It belongs to the bacterial ribosomal protein bL33 family.

The sequence is that of Large ribosomal subunit protein bL33A from Mycolicibacterium gilvum (strain PYR-GCK) (Mycobacterium gilvum (strain PYR-GCK)).